Here is a 334-residue protein sequence, read N- to C-terminus: Methionyl-tRNA formyltransferase (334 aa).

111 to 114 is a (6S)-5,6,7,8-tetrahydrofolate binding site; the sequence is SILP.

Belongs to the Fmt family.

It carries out the reaction L-methionyl-tRNA(fMet) + (6R)-10-formyltetrahydrofolate = N-formyl-L-methionyl-tRNA(fMet) + (6S)-5,6,7,8-tetrahydrofolate + H(+). Attaches a formyl group to the free amino group of methionyl-tRNA(fMet). The formyl group appears to play a dual role in the initiator identity of N-formylmethionyl-tRNA by promoting its recognition by IF2 and preventing the misappropriation of this tRNA by the elongation apparatus. The sequence is that of Methionyl-tRNA formyltransferase from Gloeothece citriformis (strain PCC 7424) (Cyanothece sp. (strain PCC 7424)).